The following is a 38-amino-acid chain: Alpha-conotoxin LvIC (38 aa).

The propeptide occupies 1–21 (SNGRNAAAGDKPSYWITLAIT). Disulfide bonds link C23–C29 and C24–C34. Q35 bears the Glutamine amide mark.

Belongs to the conotoxin A superfamily. In terms of processing, the two analogs ([DelQ14]LvIC and [D1G,DelQ14]LvIC) are amidated at their N-terminal Cys. In terms of tissue distribution, expressed by the venom gland.

The protein localises to the secreted. In terms of biological role, alpha-conotoxins bind to the nicotinic acetylcholine receptors (nAChR) and inhibit them. This synthetic peptide inhibits rat alpha-6/alpha-3-beta-4 nAChR (IC(50)=3.3 uM). The chain is Alpha-conotoxin LvIC from Conus lividus (Livid cone).